We begin with the raw amino-acid sequence, 963 residues long: MASVQWHSRSRKYDSEWQASRLEVSAVEFSDYHPLKAITVTDSKSRRGGRKGSTSSSSSSSSSVAPDPLSSMLDGTDPLSLFAAASETPTLPHSVSAGELGRKRKEKEEEVGLDFEPWSSKRGEILSRFTTTEKLSINLFMGSDTSKASSPSSAVSEKVRTRLEELDDLEEGSQRELLNLSQQDYVNRIEELNQSLKEAWGSDQKVKALKIVIQCSKLLSDTSVIQFYPSKFVLITDILDTFGGLVYDRIWSMCADPHPLPESFSADDVNDTAKETCLNWFFKIASIRELVPRLYVEAALLKCNRFLTKCGIQETLQRLTAMIRGIGDPLVAVYARAYLCRVGMEVAPHLKDSLNKNFFDLLASFRQIHGDSVQNQLVLQRVEIPVYLTLYSPAINWILQCVAYRAPEVLLTEMMDRCKKLGNNALLLNSVMWAFRAEFVATRATDFIGMIKDCDEAGFPKHLLFASLGRSLSCADPPESERLSILNEAWKVITKVRSPRDYINCAEIWVEFTCRHFTKREVNTVLADIIKHMTPDRAFEDAYPQLQSVIKKILTYFHDFSMLFSMEKFLPFLDMFQKDSVRVEVCKSIMEVFIKHQQEPTRDPVILNALLHICKTMHDSVNALTLDDEKRSLALLINGFIRMVSFGRDFEQQLSFCVEARATFCNLEPVIIHLIHTVNQLAMETGRVMKGNHSRKTAAFVRACAAYSFITIPSLTNIFSRLNLYLLSGQVALANQCLSQADAFLKAAVSILPEVPRSISIEGKQRSSESFLLDFINNFLSTLLVVPDHPEQGVLYLVRGLLNMVQDYTWEDNSDAKVRVYISALPLLAAMSQESYLYTIPKVDSNETLYGGDPKFIAEINKLCETLIGQVLDHLKSLGRDEEVRRQGSLAFSLFGCLLAHGDLRNNKLNQLAVNLWNLSHKHGICDTRTSVRTLEHIKHQAQQTDMSHFSDMTARLSLQSRA.

2 disordered regions span residues 38–71 and 85–111; these read ITVT…PLSS and ASET…EEEV. The segment covering 52 to 63 has biased composition (low complexity); sequence GSTSSSSSSSSS.

It belongs to the VPS35L family. Component of the heterotrimeric retriever complex.

Its subcellular location is the endosome. Functionally, acts as a component of the retriever complex. The retriever complex is a heterotrimeric complex related to retromer cargo-selective complex (CSC) and essential for retromer-independent retrieval and recycling of numerous cargos such as integrins. The recruitment of the retriever complex to the endosomal membrane involves CCC and WASH complexes. In the endosomes, drives the retrieval and recycling of NxxY-motif-containing cargo proteins by coupling to SNX17, a cargo essential for the homeostatic maintenance of numerous cell surface proteins associated with processes that include cell migration, cell adhesion, nutrient supply and cell signaling. May be involved in copper-dependent atp7a trafficking between the trans-Golgi network and vesicles in the cell periphery. The sequence is that of VPS35 endosomal protein-sorting factor-like (vps35l) from Danio rerio (Zebrafish).